The primary structure comprises 279 residues: 2'-N-acetylparomamine deacetylase (279 aa).

Zn(2+) contacts are provided by histidine 31, aspartate 34, and histidine 157. A disordered region spans residues 245–279 (PRRWTGGTAGAGHAAGRRGAPHTERVWTPAPAGAR). Low complexity predominate over residues 246 to 258 (RRWTGGTAGAGHA).

Belongs to the PIGL family. Zn(2+) is required as a cofactor.

It carries out the reaction 2'-N-acetylparomamine + H2O = paromamine + acetate. The enzyme catalyses 2'''-acetyl-6'''-hydroxyneomycin C + H2O = 6'''-deamino-6'''-hydroxyneomycin C + acetate. It participates in antibiotic biosynthesis; neomycin biosynthesis. Functionally, deacetylase involved in the biosynthesis of neomycin by mediating 2 steps of the pathway. Deacetylates both 2'-N-acetylparomamine and 2'''-acetyl-6'''-hydroxyneomycin C. This Streptomyces fradiae (Streptomyces roseoflavus) protein is 2'-N-acetylparomamine deacetylase (neoL).